The primary structure comprises 674 residues: MSDVDNWEPVSDNEDSTDSVKQLGPPFEHASNNDNAGDTEAESLQEVPLNTETNDVRKNLVVITNQSAADEHPTEIKHDQSRTSSTSSFFSGMISSFKSNVPSPVSRSTTPTSPVSQPSIISHRREPSMGSKRRSSRRISNATIAEIGSPLQQVEKPDEVKTRLTPSQMKEDNYDHRRFVEERYMDTPYHYASEQRNKDFHETFKSVPKDDRLLDDFNCGLNRELLYQGKLYITETHLCFNSNVLGWIAKVLIAFEDVTFMEKTSAAGLFPSAISIETKMGKTLFNGFISRDAAFGLMKEVWSRTLLQKDMASENINTKAEKSGNGKEIDDAINSIDEENNDKDANDNDTNENDDENISTNETTPNSTSSSPDKEKEKAYKLRADSSYQYDGPIYHHSTSFPAEPMANNEFVLKELPFDCAPGILFEIMFNSEQNEFLLDFLRGQEGSQITTIPNFTSIDGSSMTLKREYSYEKALHFPAGPKSTTCYVAEVIKRKDPDTYYEVISSIRTPNVPSGGSFSTKTRYLIRWNDEITCLLRVSFWVEWTGSSWIKGMVENGCKNGQLEAAQLMERILSKFIKNNVEECQITISKEEEEQDDKEVKNKLKEVDLEQPREAVVTAPAIAEQQGLKVTMETWLFLYLIVVVLLLFNLFYIRSIAVSLHQLVKLQLVELKL.

Disordered regions lie at residues 1-52 and 65-151; these read MSDV…LNTE and NQSA…GSPL. Over 1–633 the chain is Cytoplasmic; it reads MSDVDNWEPV…AEQQGLKVTM (633 aa). Basic and acidic residues predominate over residues 69 to 81; sequence ADEHPTEIKHDQS. A compositionally biased stretch (low complexity) spans 82–119; that stretch reads RTSSTSSFFSGMISSFKSNVPSPVSRSTTPTSPVSQPS. Threonine 110 bears the Phosphothreonine mark. Phosphoserine occurs at positions 113 and 140. A Phosphothreonine modification is found at threonine 143. At serine 149 the chain carries Phosphoserine. Residues 198 to 264 form the GRAM domain; sequence KDFHETFKSV…FEDVTFMEKT (67 aa). The span at 336–357 shows a compositional bias: acidic residues; it reads IDEENNDKDANDNDTNENDDEN. Residues 336–380 are disordered; the sequence is IDEENNDKDANDNDTNENDDENISTNETTPNSTSSSPDKEKEKAY. A compositionally biased stretch (low complexity) spans 358–371; the sequence is ISTNETTPNSTSSS. Residues 409-582 enclose the VASt domain; it reads NEFVLKELPF…ILSKFIKNNV (174 aa). A helical membrane pass occupies residues 634–654; sequence ETWLFLYLIVVVLLLFNLFYI. The Lumenal segment spans residues 655–674; that stretch reads RSIAVSLHQLVKLQLVELKL.

The protein belongs to the YSP2 family.

The protein localises to the endoplasmic reticulum membrane. May be involved in sterol transfer between intracellular membranes. The sequence is that of Membrane-anchored lipid-binding protein LAM5 from Saccharomyces cerevisiae (strain ATCC 204508 / S288c) (Baker's yeast).